Reading from the N-terminus, the 60-residue chain is Putative mercuric resistance protein (60 aa).

This chain is Putative mercuric resistance protein, found in Pseudomonas aeruginosa.